The sequence spans 675 residues: Serine/threonine-protein kinase ATG1 (675 aa).

Residues 25 to 328 form the Protein kinase domain; sequence FVIGGEIGKG…FEDFFNDPVV (304 aa). ATP contacts are provided by residues 31–39 and K54; that span reads IGKGSFAQV. The active-site Proton acceptor is the D168. The segment covering 339–374 has biased composition (basic and acidic residues); the sequence is DIPKVEQKPSRDLRSLEADPQREQSELAKSPRERPL. Disordered stretches follow at residues 339 to 455 and 501 to 577; these read DIPK…ERKL and RLTS…TTRS. Polar residues-rich tracts occupy residues 390 to 399, 516 to 538, and 556 to 565; these read ANVSARTGQS, ATQQ…SAVQ, and ASRSLNTSSA.

It belongs to the protein kinase superfamily. Ser/Thr protein kinase family. APG1/unc-51/ULK1 subfamily. In terms of assembly, homodimer. Forms a ternary complex with ATG13 and ATG17.

The protein localises to the cytoplasm. Its subcellular location is the preautophagosomal structure membrane. It catalyses the reaction L-seryl-[protein] + ATP = O-phospho-L-seryl-[protein] + ADP + H(+). The catalysed reaction is L-threonyl-[protein] + ATP = O-phospho-L-threonyl-[protein] + ADP + H(+). In terms of biological role, serine/threonine protein kinase involved in the cytoplasm to vacuole transport (Cvt) and found to be essential in autophagy, where it is required for the formation of autophagosomes. Involved in the clearance of protein aggregates which cannot be efficiently cleared by the proteasome. Required for selective autophagic degradation of the nucleus (nucleophagy) as well as for mitophagy which contributes to regulate mitochondrial quantity and quality by eliminating the mitochondria to a basal level to fulfill cellular energy requirements and preventing excess ROS production. Also involved in endoplasmic reticulum-specific autophagic process, in selective removal of ER-associated degradation (ERAD) substrates. Plays a key role in ATG9 and ATG23 cycling through the pre-autophagosomal structure and is necessary to promote ATG18 binding to ATG9 through phosphorylation of ATG9. Catalyzes phosphorylation of ATG4, decreasing the interaction between ATG4 and ATG8 and impairing deconjugation of PE-conjugated forms of ATG8. This chain is Serine/threonine-protein kinase ATG1, found in Colletotrichum lindemuthianum (Bean anthracnose fungus).